A 161-amino-acid chain; its full sequence is MTVGIIMGSKSDWPTMKHAAEMLDQFGVAYETKVVSAHRTPHLLADYASSAKERGLQVIIAGAGGAAHLPGMTAAFTSLPVLGVPVQSRALSGLDSLYSIVQMPKGIAVGTLAIGEAGAANAGLLAAQIIGIHNPEVMSKVEAFRAKQTQSVLDNPNPAEE.

The substrate site is built by Ser9, Asp12, and Arg39.

It belongs to the AIR carboxylase family. Class I subfamily.

It catalyses the reaction 5-carboxyamino-1-(5-phospho-D-ribosyl)imidazole + H(+) = 5-amino-1-(5-phospho-D-ribosyl)imidazole-4-carboxylate. Its pathway is purine metabolism; IMP biosynthesis via de novo pathway; 5-amino-1-(5-phospho-D-ribosyl)imidazole-4-carboxylate from 5-amino-1-(5-phospho-D-ribosyl)imidazole (N5-CAIR route): step 2/2. In terms of biological role, catalyzes the conversion of N5-carboxyaminoimidazole ribonucleotide (N5-CAIR) to 4-carboxy-5-aminoimidazole ribonucleotide (CAIR). The chain is N5-carboxyaminoimidazole ribonucleotide mutase from Vibrio cholerae serotype O1 (strain ATCC 39315 / El Tor Inaba N16961).